Consider the following 604-residue polypeptide: Glutamine--fructose-6-phosphate aminotransferase [isomerizing] (604 aa).

Cys-2 (nucleophile; for GATase activity) is an active-site residue. Residues 2 to 219 (CGIMGAVSER…EGDSACVTTQ (218 aa)) enclose the Glutamine amidotransferase type-2 domain. 2 consecutive SIS domains span residues 279 to 427 (LRAS…DNRA) and 454 to 594 (LASL…VDQP). Lys-599 serves as the catalytic For Fru-6P isomerization activity.

As to quaternary structure, homodimer.

The protein localises to the cytoplasm. The enzyme catalyses D-fructose 6-phosphate + L-glutamine = D-glucosamine 6-phosphate + L-glutamate. In terms of biological role, catalyzes the first step in hexosamine metabolism, converting fructose-6P into glucosamine-6P using glutamine as a nitrogen source. The protein is Glutamine--fructose-6-phosphate aminotransferase [isomerizing] of Legionella pneumophila (strain Lens).